Consider the following 138-residue polypeptide: Large ribosomal subunit protein bL19 (138 aa).

This sequence belongs to the bacterial ribosomal protein bL19 family.

Functionally, this protein is located at the 30S-50S ribosomal subunit interface and may play a role in the structure and function of the aminoacyl-tRNA binding site. This is Large ribosomal subunit protein bL19 from Leptospira interrogans serogroup Icterohaemorrhagiae serovar Lai (strain 56601).